The following is a 60-amino-acid chain: Ixodegrin-Ip (60 aa).

Residues 1–21 (MNAAFIAALFILGALTLDAMA) form the signal peptide. Residues 49 to 51 (RGD) carry the Cell attachment site motif.

It belongs to the ixodegrin family. Contains 3 disulfide bonds. In terms of tissue distribution, expressed in salivary glands.

It is found in the secreted. In terms of biological role, tick salivary platelet aggregation inhibitor that plays an important part in the anti-hemostatic strategy of ticks. Inhibits platelet aggregation induced by ADP, thrombin and thromboxane A2 (TXA2). Blocks platelet adhesion to soluble collagen (most probably through the binding to alpha-2/beta-1 integrin (ITGA2/ITGB1)) and binds to purified glycoprotein IIb/IIIa (ITGA2B/ITGB3) in a dose-dependent manner. In vivo, reduces thrombus weight effectively in a rat arteriovenous shunt model and inhibits thrombosis in a carrageenan-induced mouse tail thrombosis model. The protein is Ixodegrin-Ip of Ixodes pacificus (Western black-legged tick).